The primary structure comprises 502 residues: L-aspartate oxidase (502 aa).

Residues 12-15 (NGLA), lysine 34, 41-48 (ASRHAQGG), and aspartate 207 contribute to the FAD site. Arginine 276 (proton donor/acceptor) is an active-site residue. Residues glutamate 362 and 378-379 (SL) contribute to the FAD site.

The protein belongs to the FAD-dependent oxidoreductase 2 family. NadB subfamily. It depends on FAD as a cofactor.

The protein resides in the cytoplasm. The enzyme catalyses L-aspartate + O2 = iminosuccinate + H2O2. It functions in the pathway cofactor biosynthesis; NAD(+) biosynthesis; iminoaspartate from L-aspartate (oxidase route): step 1/1. Functionally, catalyzes the oxidation of L-aspartate to iminoaspartate, the first step in the de novo biosynthesis of NAD(+). This chain is L-aspartate oxidase (nadB), found in Neisseria meningitidis serogroup B (strain ATCC BAA-335 / MC58).